We begin with the raw amino-acid sequence, 206 residues long: Large ribosomal subunit protein uL4 (206 aa).

A disordered region spans residues 46–95 (GNRAQKTRAEVKHSTKKPWRQKGTGRARSGMTSSPLWRKGGRAFPNKPDE). Basic residues predominate over residues 59–70 (STKKPWRQKGTG).

It belongs to the universal ribosomal protein uL4 family. As to quaternary structure, part of the 50S ribosomal subunit.

In terms of biological role, one of the primary rRNA binding proteins, this protein initially binds near the 5'-end of the 23S rRNA. It is important during the early stages of 50S assembly. It makes multiple contacts with different domains of the 23S rRNA in the assembled 50S subunit and ribosome. Functionally, forms part of the polypeptide exit tunnel. This chain is Large ribosomal subunit protein uL4, found in Neisseria meningitidis serogroup C (strain 053442).